Reading from the N-terminus, the 402-residue chain is Elongation factor Tu (402 aa).

The tr-type G domain maps to 10–212 (KPHINIGTIG…AVDEYIPEPK (203 aa)). The segment at 19 to 26 (GHVDHGKT) is G1. Position 19–26 (19–26 (GHVDHGKT)) interacts with GTP. Threonine 26 provides a ligand contact to Mg(2+). The interval 60–64 (GITIA) is G2. The interval 81–84 (DCPG) is G3. GTP contacts are provided by residues 81-85 (DCPGH) and 136-139 (NKED). Positions 136–139 (NKED) are G4. Residues 177 to 179 (SAF) are G5.

The protein belongs to the TRAFAC class translation factor GTPase superfamily. Classic translation factor GTPase family. EF-Tu/EF-1A subfamily. As to quaternary structure, monomer.

The protein localises to the cytoplasm. The catalysed reaction is GTP + H2O = GDP + phosphate + H(+). Its function is as follows. GTP hydrolase that promotes the GTP-dependent binding of aminoacyl-tRNA to the A-site of ribosomes during protein biosynthesis. The chain is Elongation factor Tu from Sulfurovum sp. (strain NBC37-1).